Here is a 123-residue protein sequence, read N- to C-terminus: Large ribosomal subunit protein bL12 (123 aa).

This sequence belongs to the bacterial ribosomal protein bL12 family. In terms of assembly, homodimer. Part of the ribosomal stalk of the 50S ribosomal subunit. Forms a multimeric L10(L12)X complex, where L10 forms an elongated spine to which 2 to 4 L12 dimers bind in a sequential fashion. Binds GTP-bound translation factors.

Forms part of the ribosomal stalk which helps the ribosome interact with GTP-bound translation factors. Is thus essential for accurate translation. This is Large ribosomal subunit protein bL12 from Maricaulis maris (strain MCS10) (Caulobacter maris).